The chain runs to 1326 residues: Putative late blight resistance protein homolog R1B-19 (1326 aa).

Coiled-coil stretches lie at residues 421-444 and 536-558; these read RYSD…ESLQ and PRMK…KLLN. 570 to 577 contacts ATP; the sequence is GMPGLGKT. Residues 611-864 form the NB-ARC domain; that stretch reads LLSLLCDTIG…KVKTCRLHDV (254 aa). Positions 749–770 form a coiled coil; sequence SEMEKEVECWEQVANNLGTRIH. LRR repeat units follow at residues 953-978, 980-996, 1027-1050, 1053-1070, 1071-1094, 1098-1118, 1119-1146, 1167-1191, and 1208-1230; these read FKFL…VYLK, FSAH…IYNL, LRHL…SAKL, LETL…LNFP, IRLE…ISAP, YLKL…ADHL, KNLE…MFPQ, FPNL…AMNI, and LIEK…AFKR. Residues 1209–1278 enclose the HMA domain; sequence IEKKTLKLNL…AWHARVVVPT (70 aa).

The protein belongs to the disease resistance NB-LRR family.

The protein resides in the cytoplasm. Its subcellular location is the membrane. Confers resistance to late blight (Phytophthora infestans) races carrying the avirulence gene Avr1. Resistance proteins guard the plant against pathogens that contain an appropriate avirulence protein via an indirect interaction with this avirulence protein. That triggers a defense system including the hypersensitive response, which restricts the pathogen growth. The protein is Putative late blight resistance protein homolog R1B-19 (R1B-19) of Solanum demissum (Wild potato).